The sequence spans 69 residues: uncharacterized protein (69 aa).

A signal peptide spans 1–19 (MKRIWVSLMIAITACSAHA).

This is an uncharacterized protein from Pasteurella multocida (strain Pm70).